The chain runs to 437 residues: GTPase Der (437 aa).

2 consecutive EngA-type G domains span residues 4–168 (NIVA…PEKP) and 178–353 (PRFA…ENRK). GTP-binding positions include 10-17 (GRPNVGKS), 57-61 (DTGGY), 120-123 (NKVD), 184-191 (GRPNAGKS), 231-235 (DTAGI), and 296-299 (NKWD). A KH-like domain is found at 354-437 (QRISTSKFNE…VPIDIYIREK (84 aa)).

Belongs to the TRAFAC class TrmE-Era-EngA-EngB-Septin-like GTPase superfamily. EngA (Der) GTPase family. Associates with the 50S ribosomal subunit.

In terms of biological role, GTPase that plays an essential role in the late steps of ribosome biogenesis. The chain is GTPase Der from Flavobacterium johnsoniae (strain ATCC 17061 / DSM 2064 / JCM 8514 / BCRC 14874 / CCUG 350202 / NBRC 14942 / NCIMB 11054 / UW101) (Cytophaga johnsonae).